The primary structure comprises 263 residues: uncharacterized protein (263 aa).

Position 31–38 (31–38) interacts with ATP; it reads GPTGSGKT.

Belongs to the CbbQ/NirQ/NorQ/GpvN family.

This is an uncharacterized protein from Staphylococcus epidermidis (strain ATCC 12228 / FDA PCI 1200).